The sequence spans 340 residues: Glyceraldehyde-3-phosphate dehydrogenase (340 aa).

NAD(+) is bound by residues R12–I13, D40, K85, and S128. D-glyceraldehyde 3-phosphate-binding positions include S158–T160, T189, R204, T217–G218, and R240. The Nucleophile role is filled by C159. An Isoglutamyl lysine isopeptide (Lys-Gln) (interchain with Q-Cter in protein Pup) cross-link involves residue K257. N321 is a binding site for NAD(+).

It belongs to the glyceraldehyde-3-phosphate dehydrogenase family. In terms of assembly, homotetramer.

It is found in the cytoplasm. The catalysed reaction is D-glyceraldehyde 3-phosphate + phosphate + NAD(+) = (2R)-3-phospho-glyceroyl phosphate + NADH + H(+). It functions in the pathway carbohydrate degradation; glycolysis; pyruvate from D-glyceraldehyde 3-phosphate: step 1/5. In terms of biological role, catalyzes the oxidative phosphorylation of glyceraldehyde 3-phosphate (G3P) to 1,3-bisphosphoglycerate (BPG) using the cofactor NAD. The first reaction step involves the formation of a hemiacetal intermediate between G3P and a cysteine residue, and this hemiacetal intermediate is then oxidized to a thioester, with concomitant reduction of NAD to NADH. The reduced NADH is then exchanged with the second NAD, and the thioester is attacked by a nucleophilic inorganic phosphate to produce BPG. The polypeptide is Glyceraldehyde-3-phosphate dehydrogenase (gapA) (Mycolicibacterium smegmatis (strain ATCC 700084 / mc(2)155) (Mycobacterium smegmatis)).